Here is a 178-residue protein sequence, read N- to C-terminus: Large ribosomal subunit protein uL6 (178 aa).

Belongs to the universal ribosomal protein uL6 family. As to quaternary structure, part of the 50S ribosomal subunit.

Functionally, this protein binds to the 23S rRNA, and is important in its secondary structure. It is located near the subunit interface in the base of the L7/L12 stalk, and near the tRNA binding site of the peptidyltransferase center. In Streptococcus agalactiae serotype Ia (strain ATCC 27591 / A909 / CDC SS700), this protein is Large ribosomal subunit protein uL6.